Reading from the N-terminus, the 110-residue chain is Iron-sulfur cluster assembly protein CyaY (110 aa).

Belongs to the frataxin family.

Involved in iron-sulfur (Fe-S) cluster assembly. May act as a regulator of Fe-S biogenesis. In Pseudomonas putida (strain W619), this protein is Iron-sulfur cluster assembly protein CyaY.